Consider the following 258-residue polypeptide: Imidazole glycerol phosphate synthase subunit HisF (258 aa).

Catalysis depends on residues Asp-11 and Asp-130.

The protein belongs to the HisA/HisF family. As to quaternary structure, heterodimer of HisH and HisF.

It is found in the cytoplasm. The catalysed reaction is 5-[(5-phospho-1-deoxy-D-ribulos-1-ylimino)methylamino]-1-(5-phospho-beta-D-ribosyl)imidazole-4-carboxamide + L-glutamine = D-erythro-1-(imidazol-4-yl)glycerol 3-phosphate + 5-amino-1-(5-phospho-beta-D-ribosyl)imidazole-4-carboxamide + L-glutamate + H(+). The protein operates within amino-acid biosynthesis; L-histidine biosynthesis; L-histidine from 5-phospho-alpha-D-ribose 1-diphosphate: step 5/9. In terms of biological role, IGPS catalyzes the conversion of PRFAR and glutamine to IGP, AICAR and glutamate. The HisF subunit catalyzes the cyclization activity that produces IGP and AICAR from PRFAR using the ammonia provided by the HisH subunit. This is Imidazole glycerol phosphate synthase subunit HisF from Methylorubrum extorquens (strain CM4 / NCIMB 13688) (Methylobacterium extorquens).